Consider the following 264-residue polypeptide: Small ribosomal subunit protein mS23 (264 aa).

The segment at 233–264 (ARTSNPAGSWKDDTTLNTAQEEESTTSENLHF) is disordered.

Belongs to the mitochondrion-specific ribosomal protein mS23 family. As to quaternary structure, component of the mitochondrial small ribosomal subunit. Mature mitochondrial ribosomes consist of a small (37S) and a large (54S) subunit. The 37S subunit contains at least 33 different proteins and 1 molecule of RNA (15S). The 54S subunit contains at least 45 different proteins and 1 molecule of RNA (21S).

It localises to the mitochondrion. The chain is Small ribosomal subunit protein mS23 (RSM25) from Saccharomyces cerevisiae (strain YJM789) (Baker's yeast).